We begin with the raw amino-acid sequence, 946 residues long: Zinc finger protein rotund (946 aa).

Disordered stretches follow at residues 10-30 (GPQL…GHSD) and 156-269 (FRKP…HNLN). A compositionally biased stretch (polar residues) spans 161-176 (NNNGYSWSTGNNNEVV). Residues 177 to 188 (SHSSNGHTNNHP) are compositionally biased toward low complexity. Composition is skewed to polar residues over residues 198 to 230 (ASAT…SIKS) and 242 to 269 (TCKS…HNLN). C2H2-type zinc fingers lie at residues 488–510 (YQCK…TQIH), 517–539 (YKCT…TRIH), 545–567 (YRCE…IRTH), 573–597 (YKCR…SRCH), 603–625 (FKCN…IPKH), and 634–656 (HICQ…MQKH). Residues 683 to 853 (GGSANPANGP…TPSAVGPYDA (171 aa)) form a disordered region. 2 stretches are compositionally biased toward low complexity: residues 739-762 (HQQQ…QQQQ) and 770-790 (HGVP…QQQQ). Over residues 813–822 (TAPNGSQSNG) the composition is skewed to polar residues. Residues 828–841 (QPHHRMPDPVREDI) show a composition bias toward basic and acidic residues.

It belongs to the krueppel C2H2-type zinc-finger protein family. Interacts with nab; which acts as a corepressor. In terms of tissue distribution, isoform rn and isoform roe are expressed in non-overlapping domains in the larval imaginal disks. Isoform rn is first expressed during the early third larval instar in the leg, wing, haltere and antennal part of the eye-antennal imaginal disk. It is observed as a ring in the leg and antenna disks and in the presumptive wing pouch and capitellum of wing and haltere disks respectively. In wing disk it is expressed in 3 concentric domains in the wing pouch. In late third instar, expression of isoform rn in the leg disk is no longer evident, but is maintained in the other disks. Isoform roe appears in the third instar and is confined to the eye part of the eye-antennal imaginal disk in a band of 4-6 cells at the morphogenetic furrow. There is no evidence of roe expression in other imaginal disks.

The protein resides in the nucleus. Its function is as follows. Transcription factor involved in imaginal disks development. Isoform rn is required in the wings, antenna, haltere, proboscis and legs disks, while isoform roe is required in the eye disk. Together with nab corepressor, it is involved in the initiation and maintenance of wingless (wg) expression in the wing hinge, by limiting the expression of wg to this compartment. Also required for the epithelial-mesenchymal transition branch of basolateral junctions signaling. This chain is Zinc finger protein rotund, found in Drosophila melanogaster (Fruit fly).